The sequence spans 311 residues: uncharacterized protein (311 aa).

The helical transmembrane segment at Phe168–Val188 threads the bilayer.

Its subcellular location is the cell membrane. This is an uncharacterized protein from Edwardsiella tarda.